The primary structure comprises 347 residues: GTPase Obg (347 aa).

An Obg domain is found at 1-159 (MHFIDQAEIE…VRLRLELKLI (159 aa)). One can recognise an OBG-type G domain in the interval 160–328 (AEVGIVGLPN…LLQRVWQCLG (169 aa)). Residues 166–173 (GLPNAGKS), 191–195 (FTTLQ), 213–216 (DIPG), 280–283 (NKID), and 309–311 (SAI) each bind GTP. Mg(2+) is bound by residues S173 and T193.

It belongs to the TRAFAC class OBG-HflX-like GTPase superfamily. OBG GTPase family. In terms of assembly, monomer. Mg(2+) is required as a cofactor.

Its subcellular location is the cytoplasm. Its function is as follows. An essential GTPase which binds GTP, GDP and possibly (p)ppGpp with moderate affinity, with high nucleotide exchange rates and a fairly low GTP hydrolysis rate. Plays a role in control of the cell cycle, stress response, ribosome biogenesis and in those bacteria that undergo differentiation, in morphogenesis control. The protein is GTPase Obg of Synechococcus sp. (strain JA-2-3B'a(2-13)) (Cyanobacteria bacterium Yellowstone B-Prime).